The primary structure comprises 286 residues: Beta-lactamase TEM-12 (286 aa).

The signal sequence occupies residues 1 to 23; the sequence is MSIQHFRVALIPFFAAFCLPVFA. Ser68 serves as the catalytic Acyl-ester intermediate. The cysteines at positions 75 and 121 are disulfide-linked. Glu166 serves as the catalytic Proton acceptor. 232-234 is a substrate binding site; sequence KSG.

It belongs to the class-A beta-lactamase family.

The enzyme catalyses a beta-lactam + H2O = a substituted beta-amino acid. Functionally, TEM-type are the most prevalent beta-lactamases in enterobacteria; they hydrolyze the beta-lactam bond in susceptible beta-lactam antibiotics, thus conferring resistance to penicillins and cephalosporins such as ceftazidime. This Klebsiella oxytoca protein is Beta-lactamase TEM-12 (blaT-12b).